The chain runs to 276 residues: Rhomboid protease GlpG (276 aa).

Transmembrane regions (helical) follow at residues 94–114, 142–162, 169–189, 192–212, 229–249, and 250–270; these read GPVT…MSLI, IFMH…WYLG, LGSG…GYVQ, FSGP…GYVW, LIIF…GMSM, and ANGA…VDTL. The active-site Nucleophile is Ser201. His254 is a catalytic residue.

This sequence belongs to the peptidase S54 family.

The protein localises to the cell inner membrane. The enzyme catalyses Cleaves type-1 transmembrane domains using a catalytic dyad composed of serine and histidine that are contributed by different transmembrane domains.. Functionally, rhomboid-type serine protease that catalyzes intramembrane proteolysis. This is Rhomboid protease GlpG from Salmonella dublin (strain CT_02021853).